The following is a 286-amino-acid chain: 4-hydroxybenzoate octaprenyltransferase (286 aa).

The next 9 membrane-spanning stretches (helical) occupy residues 22–42, 45–65, 90–110, 113–133, 142–162, 169–189, 212–232, 236–256, and 265–285; these read IGTL…SAGV, FSLL…GCVI, LTAV…FVLV, LNQF…IYPF, QVVL…AVVG, WLLF…YAMV, LYIA…GWLE, VSYY…QWLI, and FRAF…IMLA.

It belongs to the UbiA prenyltransferase family. Requires Mg(2+) as cofactor.

The protein resides in the cell inner membrane. The enzyme catalyses all-trans-octaprenyl diphosphate + 4-hydroxybenzoate = 4-hydroxy-3-(all-trans-octaprenyl)benzoate + diphosphate. It participates in cofactor biosynthesis; ubiquinone biosynthesis. Functionally, catalyzes the prenylation of para-hydroxybenzoate (PHB) with an all-trans polyprenyl group. Mediates the second step in the final reaction sequence of ubiquinone-8 (UQ-8) biosynthesis, which is the condensation of the polyisoprenoid side chain with PHB, generating the first membrane-bound Q intermediate 3-octaprenyl-4-hydroxybenzoate. The polypeptide is 4-hydroxybenzoate octaprenyltransferase (Tolumonas auensis (strain DSM 9187 / NBRC 110442 / TA 4)).